The chain runs to 357 residues: Acyl-coenzyme A:6-aminopenicillanic-acid-acyltransferase 40 kDa form (357 aa).

The 6-aminopenicillanate site is built by Asp121 and Arg310.

Belongs to the peptidase C45 family. As to quaternary structure, the active form of the enzyme results from processing of the 40-kDa monomeric precursor to a heterodimer containing subunits of 11 and 29 kDa. The pre-AAT protein is synthesized as 40 kDa precursor which is then self-processed into an 11 kDa (protein A) and a 29 kDa (protein B). The B protein carries AAT activity.

It localises to the peroxisome matrix. It carries out the reaction isopenicillin N + phenylacetyl-CoA + H2O = penicillin G + L-2-aminoadipate + CoA + H(+). It participates in antibiotic biosynthesis; penicillin G biosynthesis; penicillin G from L-alpha-aminoadipate and L-cysteine and L-valine: step 3/3. Nonribosomal peptide synthetase; part of the gene cluster that mediates the biosynthesis of penicillin, the world's most important antibiotic. AatA catalyzes the exchange of the alpha-aminoadipyl side chain of isopenicillin N for phenylacetic acid to yield penicillin. This step occurs in the peroxisomal matrix and the penM and paaT transporters are involved in the isopenicillin N and phenylacetic acid import into the peroxisome, respectively. The penicillin biosynthesis occurs via 3 enzymatic steps, the first corresponding to the production of the tripeptide N-[(5S)-5-amino-5-carboxypentanoyl]-L-cysteinyl-D-valine (LLD-ACV or ACV) by the NRPS acvA. The tripeptide ACV is then cyclized to isopenicillin N (IPN) by the isopenicillin N synthase ipnA that forms the beta-lactam nucleus. Finally, the alpha-aminoadipyl side chain is exchanged for phenylacetic acid by the isopenicillin N acyltransferase penDE to yield penicillin in the peroxisomal matrix. This chain is Acyl-coenzyme A:6-aminopenicillanic-acid-acyltransferase 40 kDa form, found in Emericella nidulans (strain FGSC A4 / ATCC 38163 / CBS 112.46 / NRRL 194 / M139) (Aspergillus nidulans).